The sequence spans 223 residues: Protein Mis18-alpha (223 aa).

Residues Met-1–Lys-30 form a disordered region. Residues Pro-9–His-18 show a composition bias toward polar residues. Over residues Lys-21–Lys-30 the composition is skewed to basic and acidic residues. Phosphoserine is present on residues Ser-33, Ser-36, and Ser-37. In terms of domain architecture, Mis18 spans Pro-71–Leu-169. Residues Cys-76, Cys-79, Cys-132, and Cys-135 each coordinate Zn(2+). A Glycyl lysine isopeptide (Lys-Gly) (interchain with G-Cter in SUMO2) cross-link involves residue Lys-153. Ser-223 carries the phosphoserine modification.

It belongs to the mis18 family. In terms of assembly, homodimer, and heterodimer with OIP5/MIS18B. Identified in a complex containing MIS18A, OIP5/MIS18B, MIS18BP1, RBBP7 and RBBP4.

The protein localises to the nucleus. The protein resides in the chromosome. It localises to the centromere. Its function is as follows. Required for recruitment of CENPA to centromeres and normal chromosome segregation during mitosis. The sequence is that of Protein Mis18-alpha (Mis18a) from Rattus norvegicus (Rat).